We begin with the raw amino-acid sequence, 271 residues long: Protein-L-isoaspartate O-methyltransferase (271 aa).

Pro residues predominate over residues 1–15 (MRKPVTPPGNPPRPR). Positions 1–60 (MRKPVTPPGNPPRPRSPGYGSTSLAPGITAANSNTRISPPTLARPAPAAGAGGQGGNLGL) are disordered. Residues 39–49 (PPTLARPAPAA) are compositionally biased toward low complexity. S119 is a catalytic residue.

It belongs to the methyltransferase superfamily. L-isoaspartyl/D-aspartyl protein methyltransferase family.

Its subcellular location is the cytoplasm. It carries out the reaction [protein]-L-isoaspartate + S-adenosyl-L-methionine = [protein]-L-isoaspartate alpha-methyl ester + S-adenosyl-L-homocysteine. Catalyzes the methyl esterification of L-isoaspartyl residues in peptides and proteins that result from spontaneous decomposition of normal L-aspartyl and L-asparaginyl residues. It plays a role in the repair and/or degradation of damaged proteins. This is Protein-L-isoaspartate O-methyltransferase from Bordetella petrii (strain ATCC BAA-461 / DSM 12804 / CCUG 43448).